Reading from the N-terminus, the 372-residue chain is Protein-glutamate methylesterase/protein-glutamine glutaminase 1 (372 aa).

The Response regulatory domain maps to 4-121; sequence KVLVVDDSSF…ATNKDDAILL (118 aa). A 4-aspartylphosphate modification is found at Asp-55. Positions 138–174 are disordered; that stretch reads VVRPTTPTPPPRSSASSVLGGVSTHTQPAPVRSSHAA. The 194-residue stretch at 179–372 folds into the CheB-type methylesterase domain; that stretch reads SGKQYKLLLI…ESILKESARG (194 aa). Catalysis depends on residues Ser-191, His-218, and Asp-314.

It belongs to the CheB family. In terms of processing, phosphorylated by CheA. Phosphorylation of the N-terminal regulatory domain activates the methylesterase activity.

It is found in the cytoplasm. The enzyme catalyses [protein]-L-glutamate 5-O-methyl ester + H2O = L-glutamyl-[protein] + methanol + H(+). It carries out the reaction L-glutaminyl-[protein] + H2O = L-glutamyl-[protein] + NH4(+). Its function is as follows. Involved in chemotaxis. Part of a chemotaxis signal transduction system that modulates chemotaxis in response to various stimuli. Catalyzes the demethylation of specific methylglutamate residues introduced into the chemoreceptors (methyl-accepting chemotaxis proteins or MCP) by CheR. Also mediates the irreversible deamidation of specific glutamine residues to glutamic acid. The sequence is that of Protein-glutamate methylesterase/protein-glutamine glutaminase 1 from Shewanella sp. (strain MR-4).